The sequence spans 73 residues: uncharacterized protein (73 aa).

This is an uncharacterized protein from Swinepox virus (strain Kasza) (SWPV).